The chain runs to 957 residues: Glycine dehydrogenase (decarboxylating) (957 aa).

An N6-(pyridoxal phosphate)lysine modification is found at K702.

This sequence belongs to the GcvP family. In terms of assembly, the glycine cleavage system is composed of four proteins: P, T, L and H. The cofactor is pyridoxal 5'-phosphate.

It catalyses the reaction N(6)-[(R)-lipoyl]-L-lysyl-[glycine-cleavage complex H protein] + glycine + H(+) = N(6)-[(R)-S(8)-aminomethyldihydrolipoyl]-L-lysyl-[glycine-cleavage complex H protein] + CO2. Its function is as follows. The glycine cleavage system catalyzes the degradation of glycine. The P protein binds the alpha-amino group of glycine through its pyridoxal phosphate cofactor; CO(2) is released and the remaining methylamine moiety is then transferred to the lipoamide cofactor of the H protein. The chain is Glycine dehydrogenase (decarboxylating) from Bradyrhizobium sp. (strain BTAi1 / ATCC BAA-1182).